The primary structure comprises 1030 residues: Teashirt homolog 2 (1030 aa).

Positions 1-120 (MPRRKQQAPK…THPKLPSEPH (120 aa)) are disordered. Residues 11–42 (RAAGYAQEEVLKEEEEIKEEEEEEEDSGSVAQ) are a coiled coil. A compositionally biased stretch (acidic residues) spans 21-37 (LKEEEEIKEEEEEEEDS). Composition is skewed to polar residues over residues 39–49 (SVAQHQSSNDT) and 66–95 (SCQN…QVSD). The span at 103-120 (DVSDKKANTHPKLPSEPH) shows a compositional bias: basic and acidic residues. Lysine 189 is covalently cross-linked (Glycyl lysine isopeptide (Lys-Gly) (interchain with G-Cter in SUMO2)). 2 consecutive C2H2-type zinc fingers follow at residues 216–240 (FRCR…ETGH) and 276–300 (LKCM…KTKH). The interval 240–266 (HYQDDNRKKDKLRPTSYSKPRKRAFQD) is disordered. Glycyl lysine isopeptide (Lys-Gly) (interchain with G-Cter in SUMO2) cross-links involve residues lysine 307 and lysine 316. The tract at residues 328–348 (VNRPCSPDSTTGSLADSFSSQ) is disordered. Residues 334–348 (PDSTTGSLADSFSSQ) are compositionally biased toward polar residues. The segment at 381-405 (LKCMECGSSHDTLQQLTTHMMVTGH) adopts a C2H2-type 3; atypical zinc-finger fold. Lysine 418 participates in a covalent cross-link: Glycyl lysine isopeptide (Lys-Gly) (interchain with G-Cter in SUMO2). Polar residues predominate over residues 432 to 459 (SLSETPNSESLAPKPSSNSPSECTASTT). The tract at residues 432 to 488 (SLSETPNSESLAPKPSSNSPSECTASTTELKKESKKEKGEGIEDEQGVKSEDYEDSL) is disordered. The span at 460 to 482 (ELKKESKKEKGEGIEDEQGVKSE) shows a compositional bias: basic and acidic residues. Residues lysine 462, lysine 480, lysine 497, and lysine 601 each participate in a glycyl lysine isopeptide (Lys-Gly) (interchain with G-Cter in SUMO2) cross-link. 2 stretches are compositionally biased toward basic and acidic residues: residues 608–623 (DEVV…HEEA) and 633–664 (SFSK…KPEP). Disordered regions lie at residues 608-687 (DEVV…LPSI), 703-726 (KATE…VFHK), and 759-784 (QPID…SPPQ). Residue lysine 652 forms a Glycyl lysine isopeptide (Lys-Gly) (interchain with G-Cter in SUMO2) linkage. Over residues 710–722 (SPSCSSPNSSTSP) the composition is skewed to low complexity. Polar residues predominate over residues 773–783 (SSQAQSCTSPP). Glycyl lysine isopeptide (Lys-Gly) (interchain with G-Cter in SUMO2) cross-links involve residues lysine 796 and lysine 816. Residues 837 to 907 (RKGRQSNWNP…NVKYQLRKTG (71 aa)) constitute a DNA-binding region (homeobox). The C2H2-type 4 zinc finger occupies 922–944 (FYCSDCASQFRTPSTYISHLESH). Lysine 962 is covalently cross-linked (Glycyl lysine isopeptide (Lys-Gly) (interchain with G-Cter in SUMO2)). Disordered stretches follow at residues 965–987 (QEIS…EDTD) and 1009–1030 (LSKT…VDEE). Positions 968–977 (SRVSSAQRSP) are enriched in polar residues. Serine 976 carries the phosphoserine modification. The segment at 990-1013 (FKCKLCRRTFVSKHAVKLHLSKTH) adopts a C2H2-type 5 zinc-finger fold.

This sequence belongs to the teashirt C2H2-type zinc-finger protein family. Interacts (via homeobox domain) with APBB1 (via PID domain 1). Post-translationally, sumoylated.

It is found in the nucleus. Its function is as follows. Probable transcriptional regulator involved in developmental processes. May act as a transcriptional repressor (Potential). This Mus musculus (Mouse) protein is Teashirt homolog 2 (Tshz2).